The following is an 82-amino-acid chain: Small ribosomal subunit protein bS16 (82 aa).

It belongs to the bacterial ribosomal protein bS16 family.

In Natranaerobius thermophilus (strain ATCC BAA-1301 / DSM 18059 / JW/NM-WN-LF), this protein is Small ribosomal subunit protein bS16.